The sequence spans 461 residues: Chromosomal replication initiator protein DnaA (461 aa).

A domain I, interacts with DnaA modulators region spans residues 1–84 (MAVSLWQQCI…RFDIGSRPSA (84 aa)). Residues 84–124 (AKKFEPAPVATVRAPNTQTKATVGTYFNTQAEPIANANHRS) form a domain II region. Residues 125-341 (NINPTYQFDN…GALNRVIANA (217 aa)) are domain III, AAA+ region. 4 residues coordinate ATP: Gly-169, Gly-171, Lys-172, and Thr-173. A domain IV, binds dsDNA region spans residues 342-461 (NFTGRPITID…YANLIRTLSS (120 aa)).

It belongs to the DnaA family. In terms of assembly, oligomerizes as a right-handed, spiral filament on DNA at oriC.

The protein resides in the cytoplasm. Functionally, plays an essential role in the initiation and regulation of chromosomal replication. ATP-DnaA binds to the origin of replication (oriC) to initiate formation of the DNA replication initiation complex once per cell cycle. Binds the DnaA box (a 9 base pair repeat at the origin) and separates the double-stranded (ds)DNA. Forms a right-handed helical filament on oriC DNA; dsDNA binds to the exterior of the filament while single-stranded (ss)DNA is stabiized in the filament's interior. The ATP-DnaA-oriC complex binds and stabilizes one strand of the AT-rich DNA unwinding element (DUE), permitting loading of DNA polymerase. After initiation quickly degrades to an ADP-DnaA complex that is not apt for DNA replication. Binds acidic phospholipids. This is Chromosomal replication initiator protein DnaA from Shewanella putrefaciens (strain CN-32 / ATCC BAA-453).